A 505-amino-acid polypeptide reads, in one-letter code: RNA-splicing ligase RtcB homolog (505 aa).

Mn(2+)-binding residues include Asp-119, Cys-122, His-227, His-259, and His-353. 226–230 provides a ligand contact to GMP; the sequence is NHYAE. Residues 353 to 354, 402 to 405, Ser-409, 428 to 431, and Lys-504 each bind GMP; these read HN, GGTM, and HGAG. His-428 acts as the GMP-histidine intermediate in catalysis.

The protein belongs to the RtcB family. In terms of assembly, catalytic component of the tRNA-splicing ligase complex. Mn(2+) is required as a cofactor.

The protein resides in the nucleus. It localises to the cytoplasm. It catalyses the reaction a 3'-end 3'-phospho-ribonucleotide-RNA + a 5'-end dephospho-ribonucleoside-RNA + GTP = a ribonucleotidyl-ribonucleotide-RNA + GMP + diphosphate. It carries out the reaction a 3'-end 2',3'-cyclophospho-ribonucleotide-RNA + a 5'-end dephospho-ribonucleoside-RNA + GTP + H2O = a ribonucleotidyl-ribonucleotide-RNA + GMP + diphosphate + H(+). Functionally, catalytic subunit of the tRNA-splicing ligase complex that acts by directly joining spliced tRNA halves to mature-sized tRNAs by incorporating the precursor-derived splice junction phosphate into the mature tRNA as a canonical 3',5'-phosphodiester. May act as an RNA ligase with broad substrate specificity, and may function toward other RNAs. In Danio rerio (Zebrafish), this protein is RNA-splicing ligase RtcB homolog.